Here is a 155-residue protein sequence, read N- to C-terminus: Ribosomal RNA large subunit methyltransferase H (155 aa).

S-adenosyl-L-methionine contacts are provided by residues Leu-73, Gly-104, and 123–128; that span reads ISKMTF.

Belongs to the RNA methyltransferase RlmH family. Homodimer.

The protein localises to the cytoplasm. The enzyme catalyses pseudouridine(1915) in 23S rRNA + S-adenosyl-L-methionine = N(3)-methylpseudouridine(1915) in 23S rRNA + S-adenosyl-L-homocysteine + H(+). In terms of biological role, specifically methylates the pseudouridine at position 1915 (m3Psi1915) in 23S rRNA. This Francisella tularensis subsp. novicida (strain U112) protein is Ribosomal RNA large subunit methyltransferase H.